We begin with the raw amino-acid sequence, 484 residues long: Cobyric acid synthase (484 aa).

The 188-residue stretch at 248–435 folds into the GATase cobBQ-type domain; that stretch reads VLKVIVPVLP…LHGLFEGSQS (188 aa). The active-site Nucleophile is Cys-329. His-427 is a catalytic residue.

It belongs to the CobB/CobQ family. CobQ subfamily.

It functions in the pathway cofactor biosynthesis; adenosylcobalamin biosynthesis. Catalyzes amidations at positions B, D, E, and G on adenosylcobyrinic A,C-diamide. NH(2) groups are provided by glutamine, and one molecule of ATP is hydrogenolyzed for each amidation. This Pseudomonas putida (strain ATCC 700007 / DSM 6899 / JCM 31910 / BCRC 17059 / LMG 24140 / F1) protein is Cobyric acid synthase.